A 401-amino-acid polypeptide reads, in one-letter code: tRNA (guanine-N(7)-)-methyltransferase non-catalytic subunit wuho (401 aa).

The interval Lys45–Asp85 is disordered. The segment covering Ala54 to Asn64 has biased composition (acidic residues). 3 WD repeats span residues Asp86 to Lys125, Gly174 to Thr213, and Gly217 to Arg255.

Belongs to the WD repeat TRM82 family. In terms of assembly, forms a heterodimer with the catalytic subunit.

The protein resides in the nucleus. It functions in the pathway tRNA modification; N(7)-methylguanine-tRNA biosynthesis. Functionally, required for the formation of N(7)-methylguanine at position 46 (m7G46) in tRNA. In the complex, it is required to stabilize and induce conformational changes of the catalytic subunit. The chain is tRNA (guanine-N(7)-)-methyltransferase non-catalytic subunit wuho from Culex quinquefasciatus (Southern house mosquito).